Reading from the N-terminus, the 629-residue chain is 1-deoxy-D-xylulose-5-phosphate synthase (629 aa).

Thiamine diphosphate contacts are provided by residues H72 and G113–A115. D144 lines the Mg(2+) pocket. Residues G145–A146, N174, Y287, and E370 each bind thiamine diphosphate. N174 provides a ligand contact to Mg(2+).

The protein belongs to the transketolase family. DXPS subfamily. As to quaternary structure, homodimer. Mg(2+) serves as cofactor. Requires thiamine diphosphate as cofactor.

It carries out the reaction D-glyceraldehyde 3-phosphate + pyruvate + H(+) = 1-deoxy-D-xylulose 5-phosphate + CO2. It functions in the pathway metabolic intermediate biosynthesis; 1-deoxy-D-xylulose 5-phosphate biosynthesis; 1-deoxy-D-xylulose 5-phosphate from D-glyceraldehyde 3-phosphate and pyruvate: step 1/1. Its function is as follows. Catalyzes the acyloin condensation reaction between C atoms 2 and 3 of pyruvate and glyceraldehyde 3-phosphate to yield 1-deoxy-D-xylulose-5-phosphate (DXP). The polypeptide is 1-deoxy-D-xylulose-5-phosphate synthase (Prochlorococcus marinus (strain MIT 9215)).